A 341-amino-acid polypeptide reads, in one-letter code: HTH-type transcriptional repressor PurR (341 aa).

The HTH lacI-type domain occupies Ala-2–Val-56. Residues Ile-4–Asn-23 constitute a DNA-binding region (H-T-H motif). Residues Ser-48–Val-56 mediate DNA binding. Hypoxanthine is bound by residues Tyr-73, Arg-190, Thr-192, Phe-221, and Asp-275.

As to quaternary structure, homodimer.

It functions in the pathway purine metabolism; purine nucleotide biosynthesis [regulation]. In terms of biological role, is the main repressor of the genes involved in the de novo synthesis of purine nucleotides, regulating purB, purC, purEK, purF, purHD, purL, purMN and guaBA expression. PurR is allosterically activated to bind its cognate DNA by binding the purine corepressors, hypoxanthine or guanine, thereby effecting transcription repression. In Erwinia tasmaniensis (strain DSM 17950 / CFBP 7177 / CIP 109463 / NCPPB 4357 / Et1/99), this protein is HTH-type transcriptional repressor PurR.